Here is a 145-residue protein sequence, read N- to C-terminus: D-aminoacyl-tRNA deacylase (145 aa).

A Gly-cisPro motif, important for rejection of L-amino acids motif is present at residues 137–138; it reads GP.

The protein belongs to the DTD family. As to quaternary structure, homodimer.

It is found in the cytoplasm. The catalysed reaction is glycyl-tRNA(Ala) + H2O = tRNA(Ala) + glycine + H(+). The enzyme catalyses a D-aminoacyl-tRNA + H2O = a tRNA + a D-alpha-amino acid + H(+). Functionally, an aminoacyl-tRNA editing enzyme that deacylates mischarged D-aminoacyl-tRNAs. Also deacylates mischarged glycyl-tRNA(Ala), protecting cells against glycine mischarging by AlaRS. Acts via tRNA-based rather than protein-based catalysis; rejects L-amino acids rather than detecting D-amino acids in the active site. By recycling D-aminoacyl-tRNA to D-amino acids and free tRNA molecules, this enzyme counteracts the toxicity associated with the formation of D-aminoacyl-tRNA entities in vivo and helps enforce protein L-homochirality. The polypeptide is D-aminoacyl-tRNA deacylase (Klebsiella pneumoniae (strain 342)).